The sequence spans 174 residues: Large ribosomal subunit protein uL13 (174 aa).

2 disordered regions span residues 1-22 and 153-174; these read MAFPDTDVSPPRGGPSSPAKSP and GETHPHSAQKPQVLKTQPLEVK.

It belongs to the universal ribosomal protein uL13 family. As to quaternary structure, part of the 50S ribosomal subunit. Contacts proteins L3 and L20.

Its function is as follows. This protein is one of the early assembly proteins of the 50S ribosomal subunit. Binds to the 23S rRNA. The polypeptide is Large ribosomal subunit protein uL13 (rplM) (Deinococcus radiodurans (strain ATCC 13939 / DSM 20539 / JCM 16871 / CCUG 27074 / LMG 4051 / NBRC 15346 / NCIMB 9279 / VKM B-1422 / R1)).